The primary structure comprises 197 residues: TLE family member 5 (197 aa).

The interval 166 to 197 (LSALGSQAHLSKEDKNGHDGDTHQEDDGEKSD) is CCN domain. Positions 174–197 (HLSKEDKNGHDGDTHQEDDGEKSD) are disordered. Positions 175–197 (LSKEDKNGHDGDTHQEDDGEKSD) are enriched in basic and acidic residues. Ser-196 bears the Phosphoserine mark.

This sequence belongs to the WD repeat Groucho/TLE family. In terms of assembly, homooligomer and heterooligomer with other family members. Binds TCF7. Binds the NF-kappa-B subunit RELA. Interacts with PHF12. Interacts (via Q domain) with SIX3. Interacts with SIX6. In terms of processing, ubiquitinated by XIAP/BIRC4. In terms of tissue distribution, found predominantly in muscle, heart and Placenta. In fetal tissues, abundantly expressed in the heart, lung, kidney, brain and liver.

It localises to the nucleus. Transcriptional corepressor. Acts as a dominant repressor towards other family members. Inhibits NF-kappa-B-regulated gene expression. May be required for the initiation and maintenance of the differentiated state. Essential for the transcriptional repressor activity of SIX3 during retina and lens development. This is TLE family member 5 from Homo sapiens (Human).